The following is a 25-amino-acid chain: Omega-conotoxin CVIB (25 aa).

3 disulfides stabilise this stretch: cysteine 1/cysteine 16, cysteine 8/cysteine 20, and cysteine 15/cysteine 25. A Cysteine amide modification is found at cysteine 25.

This sequence belongs to the conotoxin O1 superfamily. In terms of tissue distribution, expressed by the venom duct.

The protein resides in the secreted. Functionally, omega-conotoxins act at presynaptic membranes, they bind and block voltage-gated calcium channels (Cav). This toxin blocks N-, P- and Q-type calcium channels. It shows high activities on Cav2.1/CACNA1A (IC(50)=11 nM) and Cav2.2/CACNA1B (IC(50)=7.7 nM). In addition, it shows a higher potency when Cav2.2/CACNA1B is only expressed with the ancillary subunit CACNB3 (IC(50)=1.6 nM) than on Cav2.2/CACNA1B expressed with the ancillary subunits CACNA2D1 and CACNB3 (IC(50)=12 nM). Both the Cav2.2/CACNA1B block by this toxin and the recovery are voltage-independent. It is noteworthy that ancillary subunits beta do not modulate recovery from this toxin block, since Cav2.2/CACNA1B expressed with either the ancillary subunit CACNB2a (isoform 2a) or with CACNB3 exhibits moderate recovery. The sequence is that of Omega-conotoxin CVIB from Conus catus (Cat cone).